A 154-amino-acid polypeptide reads, in one-letter code: Transcriptional repressor NrdR (154 aa).

The segment at 3–34 (CPFCSHNDSKVIDSRPTDEGQAIRRRRECISC) is a zinc-finger region. Positions 49 to 139 (LIVVKKNGNR…VYREFKDINT (91 aa)) constitute an ATP-cone domain.

The protein belongs to the NrdR family. Zn(2+) is required as a cofactor.

Functionally, negatively regulates transcription of bacterial ribonucleotide reductase nrd genes and operons by binding to NrdR-boxes. The sequence is that of Transcriptional repressor NrdR from Alkaliphilus oremlandii (strain OhILAs) (Clostridium oremlandii (strain OhILAs)).